Here is a 194-residue protein sequence, read N- to C-terminus: MNRKVGLFFGTFNPIHTGHLIIANHMAEYSDLEEIWLVVTPHNPHKKKSSLLDNHHRLEMVYRACEGYGKLKPSNIEFDLPQPNYTVNTLAHIQEKFPTNDFCLIMGEDNLKSFHKWKNSEVIIENHEIYVYPRIAPGKVADEFKTHAKITRVAAPIIEISSTFIRKSIKESKNIGPLLDEKVWKYIDEMNFYK.

The protein belongs to the NadD family.

The catalysed reaction is nicotinate beta-D-ribonucleotide + ATP + H(+) = deamido-NAD(+) + diphosphate. It functions in the pathway cofactor biosynthesis; NAD(+) biosynthesis; deamido-NAD(+) from nicotinate D-ribonucleotide: step 1/1. Catalyzes the reversible adenylation of nicotinate mononucleotide (NaMN) to nicotinic acid adenine dinucleotide (NaAD). This chain is Probable nicotinate-nucleotide adenylyltransferase, found in Christiangramia forsetii (strain DSM 17595 / CGMCC 1.15422 / KT0803) (Gramella forsetii).